The chain runs to 132 residues: Small ribosomal subunit protein uS8c (132 aa).

This sequence belongs to the universal ribosomal protein uS8 family. Part of the 30S ribosomal subunit.

The protein localises to the plastid. The protein resides in the chloroplast. Functionally, one of the primary rRNA binding proteins, it binds directly to 16S rRNA central domain where it helps coordinate assembly of the platform of the 30S subunit. The sequence is that of Small ribosomal subunit protein uS8c (rps8) from Spirogyra maxima (Green alga).